We begin with the raw amino-acid sequence, 430 residues long: Probable proton-coupled zinc antiporter SLC30A4 (430 aa).

Residues 1 to 113 (MAGPGAWKRL…LLKQRKVKTR (113 aa)) lie on the Cytoplasmic side of the membrane. Serine 36 is modified (phosphoserine). Residues 114-134 (LTIAAVLYLLFMIGELVGGYM) form a helical membrane-spanning segment. The Lumenal segment spans residues 135–143 (ANSLAIMTD). A helical membrane pass occupies residues 144–164 (ALHMLTDLSAIILTLLALWLS). Residues histidine 146 and aspartate 150 each contribute to the Zn(2+) site. Residues 165-178 (SKSPTRRFTFGFHR) lie on the Cytoplasmic side of the membrane. Residues 179–199 (LEVLSAMISVMLVYVLMGFLL) traverse the membrane as a helical segment. Residues 200-216 (YEAVQRTIHMNYEINGD) are Lumenal-facing. Residues 217–237 (VMLITAAVGVAVNVIMGFLLN) traverse the membrane as a helical segment. The Cytoplasmic segment spans residues 238–275 (QSGHHHSHAHSHSLPSNSPSMVSSGHNHGQDSLAVRAA). The segment at 240 to 265 (GHHHSHAHSHSLPSNSPSMVSSGHNH) is zinc binding. Residues 245–264 (HAHSHSLPSNSPSMVSSGHN) form a disordered region. Low complexity predominate over residues 249-263 (HSLPSNSPSMVSSGH). Residues 276 to 296 (FVHALGDLVQSVGVLIAAYII) form a helical membrane-spanning segment. Positions 278 and 282 each coordinate Zn(2+). Residues 297–311 (RFKPEYKIADPICTY) are Lumenal-facing. A helical transmembrane segment spans residues 312–332 (IFSLLVAFTTFRIIWDTVVII). Residues 333 to 430 (LEGVPSHLNV…TCANCHSSST (98 aa)) lie on the Cytoplasmic side of the membrane.

It belongs to the cation diffusion facilitator (CDF) transporter (TC 2.A.4) family. SLC30A subfamily. Homodimerization could regulate efficiency for zinc transport. Interacts with TMEM163. Widely expressed. Highly expressed in the brain and in mammary epithelial cell lines.

The protein resides in the endosome membrane. It localises to the late endosome membrane. The protein localises to the lysosome membrane. The enzyme catalyses Zn(2+)(in) + 2 H(+)(out) = Zn(2+)(out) + 2 H(+)(in). In terms of biological role, probable proton-coupled zinc ion antiporter mediating zinc import from cytoplasm potentially into the endocytic compartment. Controls zinc deposition in milk. The polypeptide is Probable proton-coupled zinc antiporter SLC30A4 (Mus musculus (Mouse)).